We begin with the raw amino-acid sequence, 539 residues long: Protein PNS1 (539 aa).

Residues 1-38 are disordered; sequence MPLNEKYERPPQPPPAYDPNHRPPSSSENSAAANVNDG. Residues 1 to 81 are Cytoplasmic-facing; that stretch reads MPLNEKYERP…NDNKPRWNDW (81 aa). Residues 25-36 show a composition bias toward low complexity; it reads SSSENSAAANVN. Residues 82 to 102 form a helical membrane-spanning segment; it reads PFTIFFLCTVGGFIAIAAITL. Over 103–129 the chain is Extracellular; it reads RAWSQTYSSTGSGIYDGVNTGTLNTNA. Residues 130–150 traverse the membrane as a helical segment; sequence AILLVFVCIIALVFSVLGLTL. Residues 151 to 157 lie on the Cytoplasmic side of the membrane; that stretch reads CRIFPKQ. Residues 158-178 form a helical membrane-spanning segment; the sequence is FIYCGMVINLVASLGTAIMYM. Residues 179–182 are Extracellular-facing; it reads SLRY. The chain crosses the membrane as a helical span at residues 183-203; that stretch reads WSAGIVFLVFTFMTAWCYWGM. Over 204–226 the chain is Cytoplasmic; that stretch reads RSRIPLSVAVLKVVVDAMKKCPQ. The helical transmembrane segment at 227 to 247 threads the bilayer; sequence IFFVSFVGALVASAFGFLFSA. Topologically, residues 248-274 are extracellular; it reads VIVATYIKYDPNSSNGGCDVSGGSCSH. A glycan (N-linked (GlcNAc...) asparagine) is linked at asparagine 259. The chain crosses the membrane as a helical span at residues 275–295; that stretch reads SKLIGVLVVVFFCGYYISEVI. Over 296-332 the chain is Cytoplasmic; it reads RNVIHCVISGVFGSWYYMSKSDQGMPRWPAFGALKRA. A helical transmembrane segment spans residues 333–353; sequence MTYSFGSICFGSLLVALIDLL. The Extracellular segment spans residues 354–371; that stretch reads RQILQMIRHDVTSSGGGQ. A helical membrane pass occupies residues 372–392; the sequence is IAIQILFMVFDWIIGFLKWLA. The Cytoplasmic segment spans residues 393-436; the sequence is EYFNHYAYSFIALYGKPYLRAAKETWYMLREKGMDALINDNLIN. A helical membrane pass occupies residues 437–457; the sequence is IALGLFSMFASYMTALFTFLY. Residues 458–473 are Extracellular-facing; that stretch reads LRFTSPQYNSNGAYNG. Residues 474–494 form a helical membrane-spanning segment; the sequence is ALMAFSFVIALQICNIATEAI. The Cytoplasmic portion of the chain corresponds to 495-539; the sequence is RSGTATFFVALGNDPEVFHHSYPHRFDEIFRAYPDVLRKLSHQNV.

This sequence belongs to the CTL (choline transporter-like) family.

It is found in the cell membrane. Probably involved in transport through the plasma membrane. This is Protein PNS1 (PNS1) from Saccharomyces cerevisiae (strain ATCC 204508 / S288c) (Baker's yeast).